The primary structure comprises 368 residues: 4-hydroxy-3-methylbut-2-en-1-yl diphosphate synthase (flavodoxin) (368 aa).

[4Fe-4S] cluster-binding residues include Cys271, Cys274, Cys306, and Glu313.

This sequence belongs to the IspG family. The cofactor is [4Fe-4S] cluster.

The enzyme catalyses (2E)-4-hydroxy-3-methylbut-2-enyl diphosphate + oxidized [flavodoxin] + H2O + 2 H(+) = 2-C-methyl-D-erythritol 2,4-cyclic diphosphate + reduced [flavodoxin]. The protein operates within isoprenoid biosynthesis; isopentenyl diphosphate biosynthesis via DXP pathway; isopentenyl diphosphate from 1-deoxy-D-xylulose 5-phosphate: step 5/6. Converts 2C-methyl-D-erythritol 2,4-cyclodiphosphate (ME-2,4cPP) into 1-hydroxy-2-methyl-2-(E)-butenyl 4-diphosphate. This Mannheimia succiniciproducens (strain KCTC 0769BP / MBEL55E) protein is 4-hydroxy-3-methylbut-2-en-1-yl diphosphate synthase (flavodoxin).